The following is a 555-amino-acid chain: mRNA cleavage and polyadenylation factor CLP1 (555 aa).

ATP-binding positions include Glu30, Lys69, and 156-161; that span reads YLGKTS. Positions 431–451 are disordered; the sequence is DDFEHITNEDENGGDGNDGDG.

The protein belongs to the Clp1 family. Clp1 subfamily. As to quaternary structure, component of a pre-mRNA cleavage factor complex. Interacts directly with PCF11.

Its subcellular location is the nucleus. Functionally, required for endonucleolytic cleavage during polyadenylation-dependent pre-mRNA 3'-end formation. This Lodderomyces elongisporus (strain ATCC 11503 / CBS 2605 / JCM 1781 / NBRC 1676 / NRRL YB-4239) (Yeast) protein is mRNA cleavage and polyadenylation factor CLP1.